Reading from the N-terminus, the 505-residue chain is SusD-like protein P2 (505 aa).

The first 17 residues, 1–17 (MKKYKITFIVLLLTLVG), serve as a signal peptide directing secretion. Cys18 is lipidated: N-palmitoyl cysteine. Cys18 is lipidated: S-diacylglycerol cysteine.

The protein belongs to the SusD family.

The protein resides in the cell outer membrane. Functionally, polysaccharide-binding protein probably involved in ulvan degradation. Ulvan is the main polysaccharide component of the Ulvales (green seaweed) cell wall. It is composed of disaccharide building blocks comprising 3-sulfated rhamnose (Rha3S) linked to D-glucuronic acid (GlcA), L-iduronic acid (IduA), or D-xylose (Xyl). The SusD-like protein may mediate ulvan oligomer-binding before transport in the periplasm for further degradation. The sequence is that of SusD-like protein P2 from Formosa agariphila (strain DSM 15362 / KCTC 12365 / LMG 23005 / KMM 3901 / M-2Alg 35-1).